Reading from the N-terminus, the 143-residue chain is Ribonuclease H (143 aa).

Residues 1-141 (MKHVEIFTDG…VDKLASDAAL (141 aa)) enclose the RNase H type-1 domain. Residues aspartate 9, glutamate 47, aspartate 69, and aspartate 133 each contribute to the Mg(2+) site.

The protein belongs to the RNase H family. As to quaternary structure, monomer. Mg(2+) serves as cofactor.

It localises to the cytoplasm. It catalyses the reaction Endonucleolytic cleavage to 5'-phosphomonoester.. In terms of biological role, endonuclease that specifically degrades the RNA of RNA-DNA hybrids. The polypeptide is Ribonuclease H (Novosphingobium aromaticivorans (strain ATCC 700278 / DSM 12444 / CCUG 56034 / CIP 105152 / NBRC 16084 / F199)).